The chain runs to 67 residues: Islet amyloid polypeptide (67 aa).

A signal peptide spans Met1 to Ala22. A propeptide spanning residues Ser23–Glu31 is cleaved from the precursor. Residues Cys35 and Cys40 are joined by a disulfide bond.

This sequence belongs to the calcitonin family. Can form homodimers. Interacts with IDE and INS. Interaction with INS inhibits homodimerization and fibril formation.

It is found in the secreted. Amylin/IAPP is a glucoregulatory peptide hormone that plays an important role in the regulation of energy homeostasis. Selectively inhibits insulin-stimulated glucose utilization and glycogen deposition in muscle, while not affecting adipocyte glucose metabolism. IAPP function is mediated by the CALCR-RAMPs (AMYRs) receptor complexes. Amylin can also bind CALCR receptor in the absence of RAMPs, although it is more selective for AMYRs. In Oryctolagus cuniculus (Rabbit), this protein is Islet amyloid polypeptide (IAPP).